Consider the following 101-residue polypeptide: Small ribosomal subunit protein uS14 (101 aa).

The protein belongs to the universal ribosomal protein uS14 family. Part of the 30S ribosomal subunit. Contacts proteins S3 and S10.

Binds 16S rRNA, required for the assembly of 30S particles and may also be responsible for determining the conformation of the 16S rRNA at the A site. This is Small ribosomal subunit protein uS14 from Brucella abortus (strain 2308).